The sequence spans 375 residues: 4,4'-diaponeurosporenoate glycosyltransferase (375 aa).

Helical transmembrane passes span 3–23, 164–184, 277–297, and 330–350; these read WLSR…ALIF, FYEG…NVFS, IMTA…GLCL, and FSNL…KIFI.

Belongs to the glycosyltransferase 2 family. CrtQ subfamily.

Its subcellular location is the cell membrane. It functions in the pathway carotenoid biosynthesis; staphyloxanthin biosynthesis; staphyloxanthin from farnesyl diphosphate: step 4/5. Functionally, catalyzes the glycosylation of 4,4'-diaponeurosporenoate, i.e. the esterification of glucose at the C1'' position with the carboxyl group of 4,4'-diaponeurosporenic acid, to form glycosyl-4,4'-diaponeurosporenoate. This is a step in the biosynthesis of staphyloxanthin, an orange pigment present in most staphylococci strains. The sequence is that of 4,4'-diaponeurosporenoate glycosyltransferase (crtQ) from Staphylococcus aureus (strain USA300).